Reading from the N-terminus, the 193-residue chain is Interleukin-18 (193 aa).

Positions 1–36 (MAAEPVEDNCINFVAMKFIDNTLYFIAEDDENLESD) are excised as a propeptide.

The protein belongs to the IL-1 family. As to quaternary structure, forms a ternary complex with ligand-binding receptor subunit IL18R1 and signaling receptor subunit IL18RAP at the plasma membrane. Mature IL18 first binds to IL18R1 forming a low affinity binary complex, which then interacts with IL18RAP to form a high affinity ternary complex that signals inside the cell. Interacts with cargo receptor TMED10; the interaction mediates the translocation from the cytoplasm into the ERGIC (endoplasmic reticulum-Golgi intermediate compartment) and thereby secretion. Post-translationally, the pro-IL-18 precursor is processed by CASP1, CASP4 or CASP5 to yield its mature, active form. The pro-IL-18 precursor features autoinhibitory interactions between the propeptide and the post-cleavage-site region, preventing recognition by the IL18R1 receptor. Processing by CASP1, CASP4 or CASP5 induces conformational changes to generate critical receptor-binding sites. The mature form is then secreted and released in the extracellular milieu by passing through the gasdermin-D (GSDMD) pore. In contrast, cleavage by CASP3 inactivates IL18. In terms of tissue distribution, expressed in ovarian carcinoma but undetectable in normal ovarian epithelial cells. Resistant to proteolytic activation by caspase-1 and -4.

It is found in the cytoplasm. The protein localises to the cytosol. It localises to the secreted. Pro-inflammatory cytokine primarily involved in epithelial barrier repair, polarized T-helper 1 (Th1) cell and natural killer (NK) cell immune responses. Upon binding to IL18R1 and IL18RAP, forms a signaling ternary complex which activates NF-kappa-B, triggering synthesis of inflammatory mediators. Synergizes with IL12/interleukin-12 to induce IFNG synthesis from T-helper 1 (Th1) cells and natural killer (NK) cells. Involved in transduction of inflammation downstream of pyroptosis: its mature form is specifically released in the extracellular milieu by passing through the gasdermin-D (GSDMD) pore. In Homo sapiens (Human), this protein is Interleukin-18.